We begin with the raw amino-acid sequence, 215 residues long: Porin MspB (215 aa).

Residues 1–31 form the signal peptide; sequence MTAFKRVLIAMISALLAGTTGMFVSAGAAHA.

The protein belongs to the mycobacterial porin (TC 1.B.24) family. Octamers. Probably forms a goblet with the wide end on the exterior of the outer membrane and a central channel. It is not known if mixed oligomers of MspB with other Msp subunits form in vivo.

It is found in the cell outer membrane. The protein resides in the secreted. Its subcellular location is the cell wall. A backup porin induced when MspA, the major porin, is deleted. Probably forms a water-filled channel which favors the permeation of cations. There are about 2400 porins in wild-type, 800 in an mspA deletion and 150 in a double mspA-mspC deletion. A triple mspA-mspC-mspD deletion mutant has low but detectable channel activity. Different conductance values with maxima at 2.3 and 4.6 nanosiemens might be caused by a simultaneous reconstitution of MspB channels into the membrane or by the existence of different MspB conformations. This chain is Porin MspB (mspB), found in Mycolicibacterium smegmatis (strain ATCC 700084 / mc(2)155) (Mycobacterium smegmatis).